The sequence spans 570 residues: MGEKPDKYEILQDLMRRRGFAWGSFEIYGGSRGFYDYGPLGATIKRKIEQKIREAFQREGFFELETPDITPEKVFIASGHVEKFVDPLVECRKCGARFRADHIIEEALGMDVEGLSAEELTKLIREHDIRCPECGGELSDVWYFNLMFETKIGPYGDQKGYLRPETAQGIFVNFKRLNAFARNKLPFGVFQIGKAYRNEISPRQGMLRLREFTQAEAEIFFNPSETEHPHFDEVKNEKLRLYPIEHQLKNLGEIELTAEEAVKKGYIMNTFFAYYMVMVKRVLLDIGIPEDKIRFRQQLPEERAHYSRDTWDAEVHSERFGWVECVGIANRGDYDLSRHMRESGADLTVLIHYDEPKIVKRLEVSLNLKRVGPKLRKDAKRINELIKSWNEEKKRELVEILGKEGKITIEGYELEKDDFIIREVEEKITGEKIVPHVLEPSFGIDRPFYLLLENSLVIEEDRTYLKLKKDMAPIEVAVLPLVAKEPLKSIAYEIFRKLQKAGFIVVYDEKDTIGRRYLRYDEIGTPYCVTIDNQTPEDSTVTIRDRDTREQVRVSIEELPSKLRELIFGE.

2 residues coordinate substrate: arginine 99 and glutamate 165. Residues 197 to 199 (RNE), 207 to 212 (LRLREF), 324 to 325 (EC), and 443 to 446 (GIDR) each bind ATP. 212–216 (FTQAE) is a binding site for substrate. 439 to 443 (EPSFG) serves as a coordination point for substrate.

This sequence belongs to the class-II aminoacyl-tRNA synthetase family.

It localises to the cytoplasm. The catalysed reaction is tRNA(Gly) + glycine + ATP = glycyl-tRNA(Gly) + AMP + diphosphate. Its function is as follows. Catalyzes the attachment of glycine to tRNA(Gly). This Thermococcus gammatolerans (strain DSM 15229 / JCM 11827 / EJ3) protein is Glycine--tRNA ligase.